Here is a 429-residue protein sequence, read N- to C-terminus: UDP-N-acetylglucosamine 1-carboxyvinyltransferase (429 aa).

22-23 lines the phosphoenolpyruvate pocket; the sequence is KN. Arg-102 provides a ligand contact to UDP-N-acetyl-alpha-D-glucosamine. Cys-126 acts as the Proton donor in catalysis. Cys-126 is modified (2-(S-cysteinyl)pyruvic acid O-phosphothioketal). Residues 131–135, Asp-316, and Ile-338 each bind UDP-N-acetyl-alpha-D-glucosamine; that span reads RPVDL.

Belongs to the EPSP synthase family. MurA subfamily.

It localises to the cytoplasm. The catalysed reaction is phosphoenolpyruvate + UDP-N-acetyl-alpha-D-glucosamine = UDP-N-acetyl-3-O-(1-carboxyvinyl)-alpha-D-glucosamine + phosphate. The protein operates within cell wall biogenesis; peptidoglycan biosynthesis. In terms of biological role, cell wall formation. Adds enolpyruvyl to UDP-N-acetylglucosamine. This is UDP-N-acetylglucosamine 1-carboxyvinyltransferase from Methylobacterium sp. (strain 4-46).